The chain runs to 443 residues: Alpha-amylase (443 aa).

An N-terminal signal peptide occupies residues 1–24 (MHNTLFRTALLAAALGSFSHTASA). Substrate is bound by residues His-114 and Arg-196. The active-site Nucleophile is the Asp-198. 201–202 (KH) contacts substrate. Glu-223 acts as the Proton donor in catalysis. Residues Gly-228 and His-287 each coordinate substrate.

Belongs to the glycosyl hydrolase 13 family.

It is found in the secreted. The catalysed reaction is Endohydrolysis of (1-&gt;4)-alpha-D-glucosidic linkages in polysaccharides containing three or more (1-&gt;4)-alpha-linked D-glucose units.. The polypeptide is Alpha-amylase (amyA) (Aeromonas hydrophila).